Here is an 82-residue protein sequence, read N- to C-terminus: Small ribosomal subunit protein bS18 (82 aa).

A disordered region spans residues 1-25; it reads MTEMNQTAIRRPFHRRRKTCPFSGT.

The protein belongs to the bacterial ribosomal protein bS18 family. As to quaternary structure, part of the 30S ribosomal subunit. Forms a tight heterodimer with protein bS6.

Binds as a heterodimer with protein bS6 to the central domain of the 16S rRNA, where it helps stabilize the platform of the 30S subunit. This Bartonella henselae (strain ATCC 49882 / DSM 28221 / CCUG 30454 / Houston 1) (Rochalimaea henselae) protein is Small ribosomal subunit protein bS18.